A 579-amino-acid polypeptide reads, in one-letter code: Adenine deaminase (579 aa).

Belongs to the metallo-dependent hydrolases superfamily. Adenine deaminase family. The cofactor is Mn(2+).

It carries out the reaction adenine + H2O + H(+) = hypoxanthine + NH4(+). The chain is Adenine deaminase from Listeria monocytogenes serotype 4b (strain F2365).